We begin with the raw amino-acid sequence, 279 residues long: Virginiamycin B lyase (279 aa).

H215 serves as a coordination point for substrate. E253 is a binding site for Mg(2+). Catalysis depends on H255, which acts as the Proton acceptor. Mg(2+) is bound at residue E270.

The protein belongs to the Vgb family. Monomer. The cofactor is Mg(2+).

In terms of biological role, inactivates the type B streptogramin antibiotics by linearizing the lactone ring at the ester linkage, generating a free phenylglycine carboxylate and converting the threonyl moiety into 2-amino-butenoic acid. This is Virginiamycin B lyase from Nocardia farcinica (strain IFM 10152).